Consider the following 144-residue polypeptide: Large ribosomal subunit protein uL15 (144 aa).

Residues 1 to 56 (MELNNLKPAEGAKHAKRRVGRGIGSGLGKTAGRGHKGQKSRSGGFHKVGFEGGQMP) are disordered. The span at 21-31 (RGIGSGLGKTA) shows a compositional bias: gly residues.

It belongs to the universal ribosomal protein uL15 family. Part of the 50S ribosomal subunit.

In terms of biological role, binds to the 23S rRNA. This Burkholderia mallei (strain NCTC 10247) protein is Large ribosomal subunit protein uL15.